The chain runs to 384 residues: Geranylgeranyl pyrophosphate synthase (384 aa).

Disordered stretches follow at residues 1–25 (MVPN…TSST) and 39–78 (RPVP…PARY). The span at 47 to 62 (LGQNNTRNRSSSTTAI) shows a compositional bias: polar residues. Isopentenyl diphosphate is bound by residues K112, R115, and H144. The Mg(2+) site is built by D151 and D155. Dimethylallyl diphosphate is bound at residue R160. R161 serves as a coordination point for isopentenyl diphosphate. 3 residues coordinate dimethylallyl diphosphate: K238, T239, and Q272. D275 provides a ligand contact to Mg(2+). Positions 279, 289, and 299 each coordinate dimethylallyl diphosphate.

The protein belongs to the FPP/GGPP synthase family. Mg(2+) is required as a cofactor.

It catalyses the reaction isopentenyl diphosphate + dimethylallyl diphosphate = (2E)-geranyl diphosphate + diphosphate. The enzyme catalyses isopentenyl diphosphate + (2E)-geranyl diphosphate = (2E,6E)-farnesyl diphosphate + diphosphate. The catalysed reaction is isopentenyl diphosphate + (2E,6E)-farnesyl diphosphate = (2E,6E,10E)-geranylgeranyl diphosphate + diphosphate. It participates in secondary metabolite biosynthesis. Functionally, catalyzes the trans-addition of the 3 molecules of isopentenyl diphosphate (IPP) onto dimethylallyl diphosphate (DMAPP) to form geranylgeranyl pyrophosphate (GGPP). GGPP is a precursor for the biosynthesis of many secondary metabolites, including the indole diterpenes nodulisporic acids (NA). The sequence is that of Geranylgeranyl pyrophosphate synthase from Hypoxylon pulicicidum.